Consider the following 377-residue polypeptide: Transcription initiation factor IIA subunit 1 (377 aa).

Residue alanine 2 is modified to N-acetylalanine. 3 stretches are compositionally biased toward low complexity: residues 69-79, 89-105, and 248-280; these read QVQQQHQPQQQ, QAQP…TQQV, and QAQI…TGDT. Disordered regions lie at residues 69 to 107 and 248 to 330; these read QVQQ…QVLI and QAQI…QELF. Phosphoserine; by TAF1 is present on residues serine 281 and serine 282. A compositionally biased stretch (acidic residues) spans 281–330; that stretch reads SSEEDEDEEEDYDDDEEEDKEKDGAEDGQVEEEPLNSEDDVSDEEGQELF. Serine 317 and serine 322 each carry phosphoserine. Residues histidine 344 and arginine 345 each coordinate DNA.

This sequence belongs to the TFIIA subunit 1 family. TFIIA is a heterodimer of the large unprocessed subunit 1 and a small subunit gamma. It was originally believed to be a heterotrimer of an alpha (p35), a beta (p19) and a gamma subunit (p12). TFIIA forms a complex with TBP. Part of TBP-based Pol II pre-initiation complex (PIC), in which Pol II core assembles with general transcription factors and other specific initiation factors including GTF2E1, GTF2E2, GTF2F1, GTF2F2, TCEA1, ERCC2, ERCC3, GTF2H2, GTF2H3, GTF2H4, GTF2H5, GTF2A1, GTF2A2, GTF2B and TBP; this large multi-subunit PIC complex mediates DNA unwinding and targets Pol II core to the transcription start site where the first phosphodiester bond forms. Post-translationally, the alpha and beta subunits are postranslationally produced from the precursor formby TASP1. The cleavage promotes proteasomal degradation.

The protein localises to the nucleus. Functionally, TFIIA is a component of the transcription machinery of RNA polymerase II and plays an important role in transcriptional activation. TFIIA in a complex with TBP mediates transcriptional activity. This chain is Transcription initiation factor IIA subunit 1 (Gtf2a1), found in Rattus norvegicus (Rat).